Consider the following 37-residue polypeptide: uncharacterized protein (37 aa).

A signal peptide spans 1 to 23; that stretch reads MLNFSLCLYPVFILNKLVLRTQS.

The protein belongs to the orthopoxviruses VACWR204.5 protein family.

This is an uncharacterized protein from Vaccinia virus (strain Western Reserve) (VACV).